Consider the following 372-residue polypeptide: Prostaglandin E synthase 2 (372 aa).

Residues 1 to 54 (MAHAVRALWPHGRALAWRLGDRPALGLHAQSRAGFTGAAGGSGPAATARKGGPR) are Lumenal-facing. A helical membrane pass occupies residues 55 to 71 (LLGAAALALGGALGLYH). The Cytoplasmic portion of the chain corresponds to 72–372 (TARWHLRAQD…VEKAIAEAPQ (301 aa)). A Glutaredoxin domain is found at 87–190 (SATQLSLSSR…DIITYYPPMK (104 aa)). S92 carries the post-translational modification Phosphoserine. Residues V145 and 161–162 (DS) each bind glutathione. Positions 259 to 372 (DYIVKEGNFG…VEKAIAEAPQ (114 aa)) constitute a GST C-terminal domain.

It belongs to the GST superfamily. In terms of assembly, may interact with CEBPB. Interacts with EXOSC10. Homodimer. Synthesized as a Golgi membrane-associated protein, and the proteolytic removal of the N-terminal hydrophobic domain leads to the formation of a mature cytosolic enzyme. Detected in heart (at protein level). Widely expressed. Expressed in heart &gt; kidney &gt; muscle &gt; testis &gt; endometrium = ovary &gt; myometrium = spleen = lung. In endometrium, it is mainly expressed in luminal epithelial cells followed by glandular epithelial cells, but expression is also present in stromal cells at a lower level.

It is found in the microsome membrane. Its subcellular location is the cytoplasm. The catalysed reaction is prostaglandin H2 = prostaglandin E2. The enzyme catalyses prostaglandin H2 = (12S)-hydroxy-(5Z,8E,10E)-heptadecatrienoate + malonaldehyde. It participates in lipid metabolism; prostaglandin biosynthesis. With respect to regulation, isomerase activity is increased by sulfhydril compounds. Dithiothreitol (DTT) is most effective, followed by glutathione (GSH) and 2-mercaptoethanol. Its function is as follows. Isomerase that catalyzes the conversion of PGH2 into the more stable prostaglandin E2 (PGE2) (in vitro). The biological function and the GSH-dependent property of PTGES2 is still under debate. In vivo, PTGES2 could form a complex with GSH and heme and would not participate in PGE2 synthesis but would catalyze the degradation of prostaglandin E2 H2 (PGH2) to 12(S)-hydroxy-5(Z),8(E),10(E)-heptadecatrienoic acid (HHT) and malondialdehyde (MDA). This chain is Prostaglandin E synthase 2 (PTGES2), found in Bos taurus (Bovine).